Reading from the N-terminus, the 450-residue chain is Phosphoglucosamine mutase (450 aa).

The active-site Phosphoserine intermediate is the Ser-104. The Mg(2+) site is built by Ser-104, Asp-243, Asp-245, and Asp-247. A Phosphoserine modification is found at Ser-104.

This sequence belongs to the phosphohexose mutase family. It depends on Mg(2+) as a cofactor. Activated by phosphorylation.

The enzyme catalyses alpha-D-glucosamine 1-phosphate = D-glucosamine 6-phosphate. In terms of biological role, catalyzes the conversion of glucosamine-6-phosphate to glucosamine-1-phosphate. This Cutibacterium acnes (strain DSM 16379 / KPA171202) (Propionibacterium acnes) protein is Phosphoglucosamine mutase.